Reading from the N-terminus, the 1056-residue chain is ATP-dependent helicase wrn-1 (1056 aa).

The segment at 1–102 is disordered; that stretch reads MISDDDDLPS…SSSDDSDQGD (102 aa). Tandem repeats lie at residues 17–26 and 28–37. Positions 17–37 are 2 X 10 AA repeats of N-[ED]-E-L-P-E-T-E-P-E; it reads NEELPETEPEDNDELPETEPE. Residues 19–38 show a composition bias toward acidic residues; sequence ELPETEPEDNDELPETEPES. Polar residues predominate over residues 43 to 53; it reads PTVTSNKTENQ. The span at 54-63 shows a compositional bias: acidic residues; the sequence is VADEDYDSFD. The 171-residue stretch at 236 to 406 folds into the Helicase ATP-binding domain; the sequence is VRNVLGGKDQ…IANLRLRKPL (171 aa). An ATP-binding site is contributed by 249–256; it reads MSTGYGKS. The short motif at 348-351 is the DEAH box element; the sequence is DEAH. Positions 427-583 constitute a Helicase C-terminal domain; the sequence is MAEDLGLFMK…NLTMMLRQLE (157 aa). Residues cysteine 591, cysteine 614, cysteine 615, and cysteine 618 each coordinate Zn(2+). The tract at residues 749–771 is disordered; the sequence is KEKAAPSTVPGASRSQSTKSSTE. Over residues 761-771 the composition is skewed to polar residues; the sequence is SRSQSTKSSTE. Residues 806 to 886 form the HRDC domain; sequence PEKIDQLRSR…VQFSKETGIA (81 aa). The disordered stretch occupies residues 1018-1056; it reads QEKPDIQSMPSTSNPSTIKTVPSTPSSSLRAPPLKKFKL. The segment covering 1025–1046 has biased composition (polar residues); it reads SMPSTSNPSTIKTVPSTPSSSL.

The protein belongs to the helicase family. RecQ subfamily. It depends on Zn(2+) as a cofactor.

It localises to the nucleus. The enzyme catalyses Couples ATP hydrolysis with the unwinding of duplex DNA by translocating in the 3'-5' direction.. It catalyses the reaction ATP + H2O = ADP + phosphate + H(+). In terms of biological role, essential for the formation of DNA replication focal centers; stably associates with foci elements generating binding sites for RP-A. Exhibits a magnesium-dependent ATP-dependent 3'-5' DNA-helicase activity. May be involved in the control of genomic stability. The polypeptide is ATP-dependent helicase wrn-1 (wrn-1) (Caenorhabditis elegans).